A 286-amino-acid chain; its full sequence is Flagellin FlaB1 (286 aa).

The required for interaction with FliW stretch occupies residues 231–286; it reads LDIAAENLQAAESRIRDANIAKQMVEYTKNQVLTQSGTAMLAQANTSAQSILSILR.

This sequence belongs to the bacterial flagellin family. As to quaternary structure, the flagellum consists of an outer layer composed of repeating units of FlaA around a core that contains several antigenically related polypeptides. Interacts via its C-terminus with FliW; a synthetic peptide of residues 229-247 partially blocks binding to FliW.

The protein localises to the periplasmic flagellum. Its subcellular location is the periplasm. In terms of biological role, component of the core of the flagella. The protein is Flagellin FlaB1 (flaB1) of Treponema pallidum (strain Nichols).